Reading from the N-terminus, the 273-residue chain is Large ribosomal subunit protein uL2cz/uL2cy (273 aa).

The tract at residues 224–273 is disordered; sequence NPVDHPHGGGEGRAPIGRKKPATPWGYPALGRRSRKRNKYSDRFILRRRK. Over residues 262–273 the composition is skewed to basic and acidic residues; it reads KYSDRFILRRRK.

The protein belongs to the universal ribosomal protein uL2 family. As to quaternary structure, part of the 50S ribosomal subunit.

The protein resides in the plastid. The protein localises to the chloroplast. The sequence is that of Large ribosomal subunit protein uL2cz/uL2cy (rpl2-A) from Piper cenocladum (Ant piper).